We begin with the raw amino-acid sequence, 267 residues long: RWD domain-containing protein 3 (267 aa).

An RWD domain is found at 7–114 (QELSALAAIF…LWIQQNLRLV (108 aa)). Interaction with UBE2I/UBC9 regions lie at residues 13-15 (AAI) and 100-102 (VHE).

In terms of assembly, interacts with UBE2I/UBC9, NFKBIA, HIF1A and NCOA2.

It localises to the nucleus. The protein localises to the cytoplasm. Functionally, enhancer of SUMO conjugation. Via its interaction with UBE2I/UBC9, increases SUMO conjugation to proteins by promoting the binding of E1 and E2 enzymes, thioester linkage between SUMO and UBE2I/UBC9 and transfer of SUMO to specific target proteins which include HIF1A, PIAS, NFKBIA, NR3C1 and TOP1. Positively regulates the NF-kappa-B signaling pathway by enhancing the sumoylation of NF-kappa-B inhibitor alpha (NFKBIA), promoting its stabilization which consequently leads to an increased inhibition of NF-kappa-B transcriptional activity. Negatively regulates the hypoxia-inducible factor-1 alpha (HIF1A) signaling pathway by increasing the sumoylation of HIF1A, promoting its stabilization, transcriptional activity and the expression of its target gene VEGFA during hypoxia. Has no effect on ubiquitination. This is RWD domain-containing protein 3 (Rwdd3) from Mus musculus (Mouse).